Consider the following 551-residue polypeptide: Glucose-6-phosphate isomerase (551 aa).

E349 acts as the Proton donor in catalysis. Active-site residues include H378 and K480.

Belongs to the GPI family.

The protein resides in the cytoplasm. It catalyses the reaction alpha-D-glucose 6-phosphate = beta-D-fructose 6-phosphate. The protein operates within carbohydrate biosynthesis; gluconeogenesis. It functions in the pathway carbohydrate degradation; glycolysis; D-glyceraldehyde 3-phosphate and glycerone phosphate from D-glucose: step 2/4. In terms of biological role, catalyzes the reversible isomerization of glucose-6-phosphate to fructose-6-phosphate. This is Glucose-6-phosphate isomerase from Prochlorococcus marinus (strain MIT 9313).